The primary structure comprises 595 residues: MLLLLLLLPPLLCGRVGAKEQKDYLLTMQKSVTVQEGLCVSVLCSFSYPQNGWTASDPVHGYWFRAGDHVSRNIPVATNNPARAVQEETRDRFHLLGDPQNKDCTLSIRDTRESDAGTYVFCVERGNMKWNYKYDQLSVNVTASQDLLSRYRLEVPESVTVQEGLCVSVPCSVLYPHYNWTASSPVYGSWFKEGADIPWDIPVATNTPSGKVQEDTHGRFLLLGDPQTNNCSLSIRDARKGDSGKYYFQVERGSRKWNYIYDKLSVHVTALTHMPTFSIPGTLESGHPRNLTCSVPWACEQGTPPTITWMGASVSSLDPTITRSSMLSLIPQPQDHGTSLTCQVTLPGAGVTMTRAVRLNISYPPQNLTMTVFQGDGTASTTLRNGSALSVLEGQSLHLVCAVDSNPPARLSWTWGSLTLSPSQSSNLGVLELPRVHVKDEGEFTCRAQNPLGSQHISLSLSLQNEYTGKMRPISGVTLGAFGGAGATALVFLYFCIIFVVVRSCRKKSARPAVGVGDTGMEDANAVRGSASQGPLIESPADDSPPHHAPPALATPSPEEGEIQYASLSFHKARPQYPQEQEAIGYEYSEINIPK.

The first 18 residues, 1–18, serve as a signal peptide directing secretion; the sequence is MLLLLLLLPPLLCGRVGA. Ig-like V-type domains follow at residues 19-142 and 143-269; these read KEQK…VNVT and ASQD…VHVT. Residues 19–481 are Extracellular-facing; the sequence is KEQKDYLLTM…RPISGVTLGA (463 aa). A disulfide bond links C44 and C104. Residues N140, N179, N230, and N290 are each glycosylated (N-linked (GlcNAc...) asparagine). Cystine bridges form between C166/C299, C171/C231, and C293/C342. Positions 275–358 constitute an Ig-like C2-type 1 domain; it reads PTFSIPGTLE…AGVTMTRAVR (84 aa). Residues N360, N367, and N385 are each glycosylated (N-linked (GlcNAc...) asparagine). An Ig-like C2-type 2 domain is found at 365 to 462; sequence PQNLTMTVFQ…GSQHISLSLS (98 aa). C401 and C446 are oxidised to a cystine. A helical membrane pass occupies residues 482–502; sequence FGGAGATALVFLYFCIIFVVV. The Cytoplasmic portion of the chain corresponds to 503–595; sequence RSCRKKSARP…YEYSEINIPK (93 aa). The tract at residues 512–560 is disordered; it reads PAVGVGDTGMEDANAVRGSASQGPLIESPADDSPPHHAPPALATPSPEE. An ITIM motif motif is present at residues 563 to 568; sequence IQYASL. Y565 and Y588 each carry phosphotyrosine. The short motif at 586-591 is the SLAM-like motif element; sequence YEYSEI.

The protein belongs to the immunoglobulin superfamily. SIGLEC (sialic acid binding Ig-like lectin) family. In terms of tissue distribution, isoform Short is highly expressed in spleen, small intestine and adrenal gland; it is lower expressed in thyroid, placenta, brain, stomach, bone marrow, spinal cord and breast. Isoform Long is highly expressed in spleen, small intestine and bone marrow; it is lower expressed in thyroid, placenta, thymus, trachea, stomach, lung, adrenal gland, fetal brain and testis.

It localises to the membrane. Functionally, putative adhesion molecule that mediates sialic-acid dependent binding to cells. The sialic acid recognition site may be masked by cis interactions with sialic acids on the same cell surface. The polypeptide is Sialic acid-binding Ig-like lectin 12 (SIGLEC12) (Homo sapiens (Human)).